Consider the following 505-residue polypeptide: Kelch-like protein 42 (505 aa).

Residues 5 to 78 (EMVQIRLEDR…INAGGAREGW (74 aa)) enclose the BTB domain. S43 is modified (phosphoserine). Kelch repeat units follow at residues 176–234 (PGDV…PLAN), 235–282 (NLPP…NEWL), 284–325 (VASM…DAWN), 327–372 (VAPL…DMWT), 374–429 (FETC…RQWL), and 431–480 (LKEN…DSWE).

Component of the BCR(KLHL42) E3 ubiquitin ligase complex, at least composed of CUL3 and KLHL42. Interacts (via the BTB domain) with CUL3. Interacts (via the kelch domains) with KATNA1.

It is found in the cytoplasm. It localises to the cytoskeleton. The protein resides in the spindle. It functions in the pathway protein modification; protein ubiquitination. In terms of biological role, substrate-specific adapter of a BCR (BTB-CUL3-RBX1) E3 ubiquitin-protein ligase complex required for mitotic progression and cytokinesis. The BCR(KLHL42) E3 ubiquitin ligase complex mediates the ubiquitination and subsequent degradation of KATNA1. Involved in microtubule dynamics throughout mitosis. The protein is Kelch-like protein 42 (KLHL42) of Homo sapiens (Human).